The primary structure comprises 364 residues: Peroxisome biogenesis protein 3-2 (364 aa).

The chain crosses the membrane as a helical span at residues 15–32 (VLVTAGCLGSGYLLYKLY). Residues 33 to 62 (NSHTRRLADLERELAHERENDEIIKTQMKA) are a coiled coil.

Belongs to the peroxin-3 family.

The protein resides in the peroxisome membrane. Its function is as follows. Involved in morphology determination of peroxisomes, but not in import of peroxisomal matrix proteins. May act as a docking factor for PEX19 and be necessary for the import of peroxisomal membrane proteins in the peroxisomes. In Arabidopsis thaliana (Mouse-ear cress), this protein is Peroxisome biogenesis protein 3-2 (PEX3-2).